Here is a 340-residue protein sequence, read N- to C-terminus: Probable complex I intermediate-associated protein 30, mitochondrial (340 aa).

This sequence belongs to the CIA30 family.

Its subcellular location is the mitochondrion. Functionally, chaperone protein involved in the assembly of the mitochondrial NADH:ubiquinone oxidoreductase complex (complex I). Required for normal growth and reproduction. The protein is Probable complex I intermediate-associated protein 30, mitochondrial (nuaf-1) of Caenorhabditis briggsae.